The chain runs to 209 residues: High mobility group protein B2 (209 aa).

At K3 the chain carries N6-acetyllysine. A DNA-binding region (HMG box 1) is located at residues 9–79 (PRGKMSSYAF…RYDREMKNYV (71 aa)). Position 23 is a cysteine sulfonic acid (-SO3H); alternate (C23). The cysteines at positions 23 and 45 are disulfide-linked. An N6-acetyllysine modification is found at K30. S35 carries the phosphoserine modification. At K43 the chain carries N6-acetyllysine. The residue at position 45 (C45) is a Cysteine sulfonic acid (-SO3H); alternate. The segment covering 52 to 76 (MSAKEKSKFEDMAKSDKARYDREMK) has biased composition (basic and acidic residues). Disordered stretches follow at residues 52 to 150 (MSAK…KAAK) and 162 to 209 (YRAK…EDEE). Position 90 is an N6-acetyllysine (K90). The segment at residues 95-163 (PKRPPSAFFL…KYEKDIAAYR (69 aa)) is a DNA-binding region (HMG box 2). Residue S100 is modified to Phosphoserine. Residue C106 is modified to Cysteine sulfonic acid (-SO3H). Composition is skewed to basic and acidic residues over residues 107–117 (SEHRPKIKSEH), 137–150 (SAKDKQPYEQKAAK), and 162–172 (YRAKGKSEAGK). N6-acetyllysine is present on residues K114 and K141. Positions 165–180 (KGKSEAGKKGPGRPTG) are required for chemotactic activity. The span at 187–209 (PEDEEEEEEEEDEDEEEEDEDEE) shows a compositional bias: acidic residues.

It belongs to the HMGB family. As to quaternary structure, interacts with POU2F2, POU2F1 and POU3F1. Component of the RAG complex composed of core components RAG1 and RAG2, and associated component HMGB1 or HMGB2. Component of the SET complex, composed of at least ANP32A, APEX1, HMGB2, NME1, SET and TREX1. Directly interacts with SET. Interacts with LEF1. Post-translationally, reduction/oxidation of cysteine residues Cys-23, Cys-45 and Cys-106 and a possible intramolecular disulfide bond involving Cys-23 and Cys-45 give rise to different redox forms with specific functional activities in various cellular compartments: 1- fully reduced HMGB2 (HMGB2C23hC45hC106h), 2- disulfide HMGB2 (HMGB2C23-C45C106h) and 3- sulfonyl HMGB2 (HMGB2C23soC45soC106so).

It localises to the nucleus. The protein resides in the chromosome. It is found in the cytoplasm. The protein localises to the secreted. Its function is as follows. Multifunctional protein with various roles in different cellular compartments. May act in a redox sensitive manner. In the nucleus is an abundant chromatin-associated non-histone protein involved in transcription, chromatin remodeling and V(D)J recombination and probably other processes. Binds DNA with a preference to non-canonical DNA structures such as single-stranded DNA. Can bent DNA and enhance DNA flexibility by looping thus providing a mechanism to promote activities on various gene promoters by enhancing transcription factor binding and/or bringing distant regulatory sequences into close proximity. Involved in V(D)J recombination by acting as a cofactor of the RAG complex: acts by stimulating cleavage and RAG protein binding at the 23 bp spacer of conserved recombination signal sequences (RSS). Proposed to be involved in the innate immune response to nucleic acids by acting as a cytoplasmic promiscuous immunogenic DNA/RNA sensor which cooperates with subsequent discriminative sensing by specific pattern recognition receptors. In the extracellular compartment acts as a chemokine. Promotes proliferation and migration of endothelial cells implicating AGER/RAGE. Has antimicrobial activity in gastrointestinal epithelial tissues. Involved in inflammatory response to antigenic stimulus coupled with pro-inflammatory activity. May play a role in germ cell differentiation. Involved in modulation of neurogenesis probably by regulation of neural stem proliferation. Involved in articular cartilage surface maintenance implicating LEF1 and the Wnt/beta-catenin pathway. This chain is High mobility group protein B2 (HMGB2), found in Bos taurus (Bovine).